Reading from the N-terminus, the 855-residue chain is Discoidin domain-containing receptor 2 (855 aa).

The N-terminal stretch at 1–21 (MILIPRMLLVLFLLLPILSSA) is a signal peptide. Over 22 to 399 (KAQVNPAICR…MLKVDDSNTR (378 aa)) the chain is Extracellular. The F5/8 type C domain maps to 30–185 (CRYPLGMSGG…VCMRVELYGC (156 aa)). 2 cysteine pairs are disulfide-bonded: C30–C185 and C73–C177. N-linked (GlcNAc...) asparagine glycosylation is found at N121, N213, N261, N280, and N372. Residues 400-421 (ILIGCLVAIIFILLAIIVIILW) traverse the membrane as a helical segment. The Cytoplasmic segment spans residues 422-855 (RQFWQKMLEK…HLLLLQQGDE (434 aa)). A disordered region spans residues 452–471 (SMFNNNRSSSPSEQGSNSTY). Y471 carries the post-translational modification Phosphotyrosine; by SRC and autocatalysis. A Protein kinase domain is found at 563–849 (LTFKEKLGEG…PSFQEIHLLL (287 aa)). ATP-binding positions include 569–577 (LGEGQFGEV) and K608. The active-site Proton acceptor is the D710. Phosphotyrosine; by SRC and autocatalysis is present on residues Y736, Y740, and Y741.

It belongs to the protein kinase superfamily. Tyr protein kinase family. Insulin receptor subfamily. Binds hydroxyproline-rich sequence motifs in fibrillar, glycosylated collagen, such as the GQOGVMGFO motif, where O stands for hydroxyproline. Interacts with SRC. Interacts (tyrosine phosphorylated) with SHC1. In terms of processing, N-glycosylated. Post-translationally, tyrosine phosphorylated in response to collagen binding. Phosphorylated by SRC; this is required for activation and subsequent autophosphorylation on additional tyrosine residues. Detected in osteocytes, osteoblastic cells in subchondral bone, bone lining cells, tibia and cartilage (at protein level). Detected at high levels in heart and lung, and at low levels in brain, placenta, liver, skeletal muscle, pancreas, and kidney.

The protein resides in the cell membrane. It catalyses the reaction L-tyrosyl-[protein] + ATP = O-phospho-L-tyrosyl-[protein] + ADP + H(+). Its activity is regulated as follows. Present in an inactive state in the absence of collagen binding and phosphorylation by SRC. Tyrosine phosphorylation enhances the affinity for ATP and the catalytic activity. Tyrosine kinase involved in the regulation of tissues remodeling. It functions as a cell surface receptor for fibrillar collagen and regulates cell differentiation, remodeling of the extracellular matrix, cell migration and cell proliferation. Required for normal bone development. Regulates osteoblast differentiation and chondrocyte maturation via a signaling pathway that involves MAP kinases and leads to the activation of the transcription factor RUNX2. Regulates remodeling of the extracellular matrix by up-regulation of the collagenases MMP1, MMP2 and MMP13, and thereby facilitates cell migration and tumor cell invasion. Promotes fibroblast migration and proliferation, and thereby contributes to cutaneous wound healing. This Homo sapiens (Human) protein is Discoidin domain-containing receptor 2 (DDR2).